The primary structure comprises 1390 residues: Hepatocyte growth factor receptor (1390 aa).

An N-terminal signal peptide occupies residues methionine 1 to glycine 24. The Extracellular portion of the chain corresponds to glutamate 25 to threonine 932. The region spanning lysine 27–leucine 515 is the Sema domain. An N-linked (GlcNAc...) asparagine glycan is attached at asparagine 45. 4 disulfide bridges follow: cysteine 95-cysteine 101, cysteine 98-cysteine 160, cysteine 133-cysteine 141, and cysteine 172-cysteine 175. The N-linked (GlcNAc...) asparagine glycan is linked to asparagine 106. Asparagine 149 carries an N-linked (GlcNAc...) asparagine glycan. Asparagine 202 is a glycosylation site (N-linked (GlcNAc...) asparagine). Cystine bridges form between cysteine 298-cysteine 363 and cysteine 385-cysteine 397. 2 N-linked (GlcNAc...) asparagine glycosylation sites follow: asparagine 399 and asparagine 405. 4 disulfides stabilise this stretch: cysteine 520/cysteine 538, cysteine 526/cysteine 561, cysteine 529/cysteine 545, and cysteine 541/cysteine 551. 3 IPT/TIG domains span residues proline 563 to valine 655, proline 657 to arginine 739, and proline 742 to valine 836. Threonine 582 carries an O-linked (Man) threonine glycan. 2 N-linked (GlcNAc...) asparagine glycosylation sites follow: asparagine 607 and asparagine 635. 2 O-linked (Man) threonine glycosylation sites follow: threonine 676 and threonine 761. Asparagine 785, asparagine 879, and asparagine 930 each carry an N-linked (GlcNAc...) asparagine glycan. A helical transmembrane segment spans residues glycine 933–leucine 955. Topologically, residues lysine 956–serine 1390 are cytoplasmic. Serine 966 carries the phosphoserine modification. At threonine 977 the chain carries Phosphothreonine. Phosphoserine occurs at positions 990, 997, and 1000. Position 1003 is a phosphotyrosine (tyrosine 1003). The region spanning valine 1078–isoleucine 1345 is the Protein kinase domain. ATP-binding positions include isoleucine 1084–valine 1092 and lysine 1110. Residue aspartate 1204 is the Proton acceptor of the active site. The interaction with RANBP9 stretch occupies residues leucine 1212 to serine 1390. The residue at position 1230 (tyrosine 1230) is a Phosphotyrosine. Phosphotyrosine; by autocatalysis is present on residues tyrosine 1234 and tyrosine 1235. The residue at position 1289 (threonine 1289) is a Phosphothreonine. An interaction with MUC20 region spans residues tryptophan 1320–valine 1359. Phosphotyrosine; by autocatalysis occurs at positions 1349 and 1356. A Phosphotyrosine modification is found at tyrosine 1365.

The protein belongs to the protein kinase superfamily. Tyr protein kinase family. In terms of assembly, heterodimer made of an alpha chain (50 kDa) and a beta chain (145 kDa) which are disulfide linked. Binds PLXNB1. Interacts when phosphorylated with downstream effectors including STAT3, PIK3R1, SRC, PCLG1, GRB2 and GAB1. Interacts with SPSB1, SPSB2 and SPSB4. Interacts with INPP5D/SHIP1. When phosphorylated at Tyr-1356, interacts with INPPL1/SHIP2. Interacts with RANBP9 and RANBP10, as well as SPSB1, SPSB2, SPSB3 and SPSB4. SPSB1 binding occurs in the presence and in the absence of HGF, however HGF treatment has a positive effect on this interaction. Interacts with MUC20; prevents interaction with GRB2 and suppresses hepatocyte growth factor-induced cell proliferation. Interacts with GRB10. Interacts with PTPN1 and PTPN2. Interacts with HSP90AA1 and HSP90AB1; the interaction suppresses MET kinase activity. Interacts with tensin TNS3. Interacts (when phosphorylated) with tensin TNS4 (via SH2 domain); the interaction increases MET protein stability by inhibiting MET endocytosis and subsequent lysosomal degradation. Post-translationally, autophosphorylated in response to ligand binding on Tyr-1234 and Tyr-1235 in the kinase domain leading to further phosphorylation of Tyr-1349 and Tyr-1356 in the C-terminal multifunctional docking site. Dephosphorylated by PTPRJ at Tyr-1349 and Tyr-1365. Dephosphorylated by PTPN1 and PTPN2. In terms of processing, ubiquitinated. Ubiquitination by CBL regulates the receptor stability and activity through proteasomal degradation. O-mannosylation of IPT/TIG domains by TMEM260 is required for protein maturation. O-mannosylated residues are composed of single mannose glycans that are not elongated or modified.

Its subcellular location is the membrane. The enzyme catalyses L-tyrosyl-[protein] + ATP = O-phospho-L-tyrosyl-[protein] + ADP + H(+). Its activity is regulated as follows. In its inactive state, the C-terminal tail interacts with the catalytic domain and inhibits the kinase activity. Upon ligand binding, the C-terminal tail is displaced and becomes phosphorylated, thus increasing the kinase activity. Functionally, receptor tyrosine kinase that transduces signals from the extracellular matrix into the cytoplasm by binding to hepatocyte growth factor/HGF ligand. Regulates many physiological processes including proliferation, scattering, morphogenesis and survival. Ligand binding at the cell surface induces autophosphorylation of MET on its intracellular domain that provides docking sites for downstream signaling molecules. Following activation by ligand, interacts with the PI3-kinase subunit PIK3R1, PLCG1, SRC, GRB2, STAT3 or the adapter GAB1. Recruitment of these downstream effectors by MET leads to the activation of several signaling cascades including the RAS-ERK, PI3 kinase-AKT, or PLCgamma-PKC. The RAS-ERK activation is associated with the morphogenetic effects while PI3K/AKT coordinates prosurvival effects. During embryonic development, MET signaling plays a role in gastrulation, development and migration of muscles and neuronal precursors, angiogenesis and kidney formation. In adults, participates in wound healing as well as organ regeneration and tissue remodeling. Also promotes differentiation and proliferation of hematopoietic cells. The sequence is that of Hepatocyte growth factor receptor (MET) from Pan troglodytes (Chimpanzee).